We begin with the raw amino-acid sequence, 284 residues long: 4-hydroxybenzoate octaprenyltransferase (284 aa).

8 consecutive transmembrane segments (helical) span residues Pro16–Gly36, Trp40–Val60, Leu91–Leu111, Phe132–Phe152, Asn157–Tyr177, Ala207–Phe227, Ile231–Ile251, and Cys259–Leu279.

This sequence belongs to the UbiA prenyltransferase family. Mg(2+) is required as a cofactor.

The protein localises to the cell inner membrane. It catalyses the reaction all-trans-octaprenyl diphosphate + 4-hydroxybenzoate = 4-hydroxy-3-(all-trans-octaprenyl)benzoate + diphosphate. Its pathway is cofactor biosynthesis; ubiquinone biosynthesis. Functionally, catalyzes the prenylation of para-hydroxybenzoate (PHB) with an all-trans polyprenyl group. Mediates the second step in the final reaction sequence of ubiquinone-8 (UQ-8) biosynthesis, which is the condensation of the polyisoprenoid side chain with PHB, generating the first membrane-bound Q intermediate 3-octaprenyl-4-hydroxybenzoate. The polypeptide is 4-hydroxybenzoate octaprenyltransferase (Janthinobacterium sp. (strain Marseille) (Minibacterium massiliensis)).